Reading from the N-terminus, the 411-residue chain is Glutamate dehydrogenase 3, mitochondrial (411 aa).

The transit peptide at 1–18 directs the protein to the mitochondrion; that stretch reads MNALAATSRNFRQAARLL. Lysine 102 is an active-site residue.

It belongs to the Glu/Leu/Phe/Val dehydrogenases family. In terms of tissue distribution, barely expressed in leaves, spikelets and roots. Glumes and stamens specific accumulation.

Its subcellular location is the mitochondrion. It carries out the reaction L-glutamate + NAD(+) + H2O = 2-oxoglutarate + NH4(+) + NADH + H(+). The enzyme catalyses L-glutamate + NADP(+) + H2O = 2-oxoglutarate + NH4(+) + NADPH + H(+). The protein is Glutamate dehydrogenase 3, mitochondrial (GDH3) of Oryza sativa subsp. japonica (Rice).